The chain runs to 360 residues: Transcription elongation factor, mitochondrial (360 aa).

Residues 1–35 constitute a mitochondrion transit peptide; that stretch reads MSGSVLFTAGERWRCFLTPSRSSLYWALHNFCCRK.

It belongs to the TEFM family. In terms of assembly, interacts with POLRMT.

It is found in the mitochondrion matrix. It localises to the mitochondrion nucleoid. In terms of biological role, transcription elongation factor which increases mitochondrial RNA polymerase processivity. Regulates transcription of the mitochondrial genome, including genes important for the oxidative phosphorylation machinery. The sequence is that of Transcription elongation factor, mitochondrial (TEFM) from Homo sapiens (Human).